The primary structure comprises 138 residues: Ribulose bisphosphate carboxylase small subunit (138 aa).

The protein belongs to the RuBisCO small chain family. As to quaternary structure, heterohexadecamer of 8 large and 8 small subunits.

It localises to the plastid. The protein localises to the chloroplast. Functionally, ruBisCO catalyzes two reactions: the carboxylation of D-ribulose 1,5-bisphosphate, the primary event in carbon dioxide fixation, as well as the oxidative fragmentation of the pentose substrate in the photorespiration process. Both reactions occur simultaneously and in competition at the same active site. Although the small subunit is not catalytic it is essential for maximal activity. In Cyanidioschyzon merolae (strain NIES-3377 / 10D) (Unicellular red alga), this protein is Ribulose bisphosphate carboxylase small subunit.